The sequence spans 339 residues: MAAMAAKLHISTKSDQSNVRLPRLINLSRDPTARVLFPRNGSVSSLHTNFSSPNIMVPCAGGGGGGSIGNHGGGSGSGGGGGGYGGSEEEESSPWGPLGLFIQGWRSRVAADSQFPFKVLMEMLVGVSANVLGDMASRPNFGLNELDFVFSTLVVGSILNFTLMYLLAPSAISHGSSNLLPGIFRSCPSSHMFEQGNFTLMNRFGTLVYKGMVFATVGLAAGLVGTAISNGLIMLRKKIDPSFETPNKPPPTLLNSLTWATHMGVSANVRYQTLNGAEFLLEKSLPPLVFKTSVIALRVVNNVLGGMSFVTLARMTGSQSVEEEKKIEMSEISEKEKED.

A chloroplast-targeting transit peptide spans 1–58 (MAAMAAKLHISTKSDQSNVRLPRLINLSRDPTARVLFPRNGSVSSLHTNFSSPNIMVP). Positions 68-86 (IGNHGGGSGSGGGGGGYGG) are enriched in gly residues. Residues 68 to 92 (IGNHGGGSGSGGGGGGYGGSEEEES) are disordered. 2 helical membrane-spanning segments follow: residues 148–168 (FVFS…YLLA) and 213–233 (VFAT…NGLI).

The protein belongs to the RETICULATA family.

It is found in the plastid. The protein resides in the chloroplast membrane. May play a role in leaf development. The protein is Protein RETICULATA-RELATED 2, chloroplastic of Arabidopsis thaliana (Mouse-ear cress).